Reading from the N-terminus, the 391-residue chain is D-alanine--D-alanine ligase (391 aa).

The segment at M1–R24 is disordered. An ATP-grasp domain is found at K171 to Q381. A207 to E262 is an ATP binding site. D335, E348, and N350 together coordinate Mg(2+).

This sequence belongs to the D-alanine--D-alanine ligase family. It depends on Mg(2+) as a cofactor. Mn(2+) serves as cofactor.

It localises to the cytoplasm. It catalyses the reaction 2 D-alanine + ATP = D-alanyl-D-alanine + ADP + phosphate + H(+). Its pathway is cell wall biogenesis; peptidoglycan biosynthesis. Its function is as follows. Cell wall formation. The sequence is that of D-alanine--D-alanine ligase from Streptomyces griseus subsp. griseus (strain JCM 4626 / CBS 651.72 / NBRC 13350 / KCC S-0626 / ISP 5235).